The sequence spans 283 residues: 4-hydroxy-tetrahydrodipicolinate synthase (283 aa).

Thr46 provides a ligand contact to pyruvate. Tyr134 (proton donor/acceptor) is an active-site residue. Lys162 acts as the Schiff-base intermediate with substrate in catalysis. Ile208 serves as a coordination point for pyruvate.

This sequence belongs to the DapA family. As to quaternary structure, homotetramer; dimer of dimers.

Its subcellular location is the cytoplasm. It catalyses the reaction L-aspartate 4-semialdehyde + pyruvate = (2S,4S)-4-hydroxy-2,3,4,5-tetrahydrodipicolinate + H2O + H(+). The protein operates within amino-acid biosynthesis; L-lysine biosynthesis via DAP pathway; (S)-tetrahydrodipicolinate from L-aspartate: step 3/4. In terms of biological role, catalyzes the condensation of (S)-aspartate-beta-semialdehyde [(S)-ASA] and pyruvate to 4-hydroxy-tetrahydrodipicolinate (HTPA). The chain is 4-hydroxy-tetrahydrodipicolinate synthase from Methanothermobacter thermautotrophicus (strain ATCC 29096 / DSM 1053 / JCM 10044 / NBRC 100330 / Delta H) (Methanobacterium thermoautotrophicum).